Here is a 174-residue protein sequence, read N- to C-terminus: Putative serine protease 46 (174 aa).

The Peptidase S1 domain occupies 43-174 (VVKGKLVEVG…IGWGTTGKKG (132 aa)). The cysteines at positions 68 and 84 are disulfide-linked. Active-site charge relay system residues include H83 and D128.

This sequence belongs to the peptidase S1 family.

This is Putative serine protease 46 from Homo sapiens (Human).